The chain runs to 535 residues: Dimethylaniline monooxygenase [N-oxide-forming] 2 (535 aa).

A2 carries the post-translational modification N-acetylalanine. FAD contacts are provided by residues 9–13, E32, 40–41, and 61–62; these read GAGVS, LW, and NT. NADP(+) contacts are provided by residues 60 to 61 and 195 to 198; these read TN and SAAD. Residue K492 forms a Glycyl lysine isopeptide (Lys-Gly) (interchain with G-Cter in SUMO) linkage. Residues 510-530 traverse the membrane as a helical segment; the sequence is APVSFLLKILGLLAVVLAFFF.

It belongs to the FMO family. It depends on FAD as a cofactor. Mg(2+) is required as a cofactor.

The protein resides in the microsome membrane. Its subcellular location is the endoplasmic reticulum membrane. Catalyzes the oxidative metabolism of numerous xenobiotics, including mainly therapeutic drugs and insecticides that contain a soft nucleophile, most commonly nitrogen and sulfur and participates to their bioactivation. Catalyzes the S-oxygenation of the prodrug ethionamide (ETA) to the S-oxide (ETASO), the first step in its bioactivation following by the second oxygenation to the sulfinic acid but to a lesser extend. In Mus musculus (Mouse), this protein is Dimethylaniline monooxygenase [N-oxide-forming] 2.